We begin with the raw amino-acid sequence, 1826 residues long: 1,3-beta-glucan synthase component bgs3 (1826 aa).

Positions Q34–Q43 are enriched in polar residues. Residues Q34–D90 are disordered. Positions D59–D75 are enriched in acidic residues. A run of 7 helical transmembrane segments spans residues I427–Y447, W465–L485, L504–F524, F543–G563, A597–L617, F637–L657, and L660–I680. S885 carries the phosphoserine modification. Helical transmembrane passes span V1272–Y1292, I1329–L1349, V1375–T1397, G1417–V1437, W1438–I1458, I1531–F1551, I1571–M1591, Y1607–F1627, V1642–F1662, C1701–F1721, and S1770–L1790.

It belongs to the glycosyltransferase 48 family. As to quaternary structure, component of the 1,3-beta-glucan synthase (GS) complex, composed of at least the alternate catalytic subunits bgs1, bgs2, bgs3, and bgs4, and a regulatory subunit chr4.

The protein resides in the membrane. The enzyme catalyses [(1-&gt;3)-beta-D-glucosyl](n) + UDP-alpha-D-glucose = [(1-&gt;3)-beta-D-glucosyl](n+1) + UDP + H(+). Its function is as follows. Alternate catalytic subunit of the 1,3-beta-glucan synthase (GS) complex. Synthesizes 1,3-beta-glucan, a major structural component of the yeast cell wall. Required for cell wall biosynthesis and cell elongation. The protein is 1,3-beta-glucan synthase component bgs3 of Schizosaccharomyces pombe (strain 972 / ATCC 24843) (Fission yeast).